A 205-amino-acid chain; its full sequence is Holliday junction branch migration complex subunit RuvA (205 aa).

The domain I stretch occupies residues 1 to 62 (MFEYVTGYVE…EDIMALYGFK (62 aa)). A domain II region spans residues 63–141 (TREERLLFTK…DVVPDAFVDL (79 aa)). The segment at 142–152 (FSDTERFDEKK) is flexible linker. The segment at 153-205 (GTSAELDEALEALRALGYAEREVSRVVPELLKESLTTDQYIKKALSLLLNGKR) is domain III.

Belongs to the RuvA family. Homotetramer. Forms an RuvA(8)-RuvB(12)-Holliday junction (HJ) complex. HJ DNA is sandwiched between 2 RuvA tetramers; dsDNA enters through RuvA and exits via RuvB. An RuvB hexamer assembles on each DNA strand where it exits the tetramer. Each RuvB hexamer is contacted by two RuvA subunits (via domain III) on 2 adjacent RuvB subunits; this complex drives branch migration. In the full resolvosome a probable DNA-RuvA(4)-RuvB(12)-RuvC(2) complex forms which resolves the HJ.

Its subcellular location is the cytoplasm. In terms of biological role, the RuvA-RuvB-RuvC complex processes Holliday junction (HJ) DNA during genetic recombination and DNA repair, while the RuvA-RuvB complex plays an important role in the rescue of blocked DNA replication forks via replication fork reversal (RFR). RuvA specifically binds to HJ cruciform DNA, conferring on it an open structure. The RuvB hexamer acts as an ATP-dependent pump, pulling dsDNA into and through the RuvAB complex. HJ branch migration allows RuvC to scan DNA until it finds its consensus sequence, where it cleaves and resolves the cruciform DNA. This chain is Holliday junction branch migration complex subunit RuvA, found in Bacillus cereus (strain G9842).